We begin with the raw amino-acid sequence, 333 residues long: Fructose-1,6-bisphosphatase class 1 (333 aa).

Mg(2+)-binding residues include glutamate 92, aspartate 114, leucine 116, and aspartate 117. Substrate is bound by residues 117-120 (DGSS) and asparagine 209. Mg(2+) is bound at residue glutamate 279.

This sequence belongs to the FBPase class 1 family. As to quaternary structure, homotetramer. Requires Mg(2+) as cofactor.

It is found in the cytoplasm. It catalyses the reaction beta-D-fructose 1,6-bisphosphate + H2O = beta-D-fructose 6-phosphate + phosphate. It participates in carbohydrate biosynthesis; gluconeogenesis. The chain is Fructose-1,6-bisphosphatase class 1 from Alkalilimnicola ehrlichii (strain ATCC BAA-1101 / DSM 17681 / MLHE-1).